Here is a 203-residue protein sequence, read N- to C-terminus: ATP phosphoribosyltransferase (203 aa).

It belongs to the ATP phosphoribosyltransferase family. Short subfamily.

The protein resides in the cytoplasm. The catalysed reaction is 1-(5-phospho-beta-D-ribosyl)-ATP + diphosphate = 5-phospho-alpha-D-ribose 1-diphosphate + ATP. It participates in amino-acid biosynthesis; L-histidine biosynthesis; L-histidine from 5-phospho-alpha-D-ribose 1-diphosphate: step 1/9. Catalyzes the condensation of ATP and 5-phosphoribose 1-diphosphate to form N'-(5'-phosphoribosyl)-ATP (PR-ATP). Has a crucial role in the pathway because the rate of histidine biosynthesis seems to be controlled primarily by regulation of HisG enzymatic activity. This is ATP phosphoribosyltransferase from Thermococcus kodakarensis (strain ATCC BAA-918 / JCM 12380 / KOD1) (Pyrococcus kodakaraensis (strain KOD1)).